The primary structure comprises 373 residues: tRNA-specific 2-thiouridylase MnmA (373 aa).

Residues G12–S19 and M38 contribute to the ATP site. Residues N98 to D100 are interaction with target base in tRNA. Catalysis depends on C103, which acts as the Nucleophile. C103 and C200 are disulfide-bonded. G127 is an ATP binding site. The interaction with tRNA stretch occupies residues K150–Q152. C200 acts as the Cysteine persulfide intermediate in catalysis. Residues R312–Y313 are interaction with tRNA.

It belongs to the MnmA/TRMU family.

It localises to the cytoplasm. The catalysed reaction is S-sulfanyl-L-cysteinyl-[protein] + uridine(34) in tRNA + AH2 + ATP = 2-thiouridine(34) in tRNA + L-cysteinyl-[protein] + A + AMP + diphosphate + H(+). In terms of biological role, catalyzes the 2-thiolation of uridine at the wobble position (U34) of tRNA, leading to the formation of s(2)U34. This Streptococcus pneumoniae (strain CGSP14) protein is tRNA-specific 2-thiouridylase MnmA.